Reading from the N-terminus, the 205-residue chain is Methylthioribulose-1-phosphate dehydratase (205 aa).

Positions 94 and 96 each coordinate Zn(2+).

Belongs to the aldolase class II family. MtnB subfamily. It depends on Zn(2+) as a cofactor.

The enzyme catalyses 5-(methylsulfanyl)-D-ribulose 1-phosphate = 5-methylsulfanyl-2,3-dioxopentyl phosphate + H2O. It participates in amino-acid biosynthesis; L-methionine biosynthesis via salvage pathway; L-methionine from S-methyl-5-thio-alpha-D-ribose 1-phosphate: step 2/6. Its function is as follows. Catalyzes the dehydration of methylthioribulose-1-phosphate (MTRu-1-P) into 2,3-diketo-5-methylthiopentyl-1-phosphate (DK-MTP-1-P). This Pectobacterium carotovorum subsp. carotovorum (strain PC1) protein is Methylthioribulose-1-phosphate dehydratase.